Consider the following 295-residue polypeptide: G1/S-specific cyclin-D1 (295 aa).

A Cyclin N-terminal domain is found at 28–152; that stretch reads LRAMLKAEET…LLVNKLKWNL (125 aa). The tract at residues 264–295 is disordered; the sequence is QQSLDPKAAEEEEEEEEADLACTPTDVRDVNI. Lys270 is covalently cross-linked (Glycyl lysine isopeptide (Lys-Gly) (interchain with G-Cter in ubiquitin)). Residues 273–282 are compositionally biased toward acidic residues; the sequence is EEEEEEEEAD. Thr286 is modified (phosphothreonine).

Belongs to the cyclin family. Cyclin D subfamily. As to quaternary structure, interacts with either CDK4 or CDK6 protein kinase to form a serine/threonine kinase holoenzyme complex. The cyclin subunit imparts substrate specificity to the complex. Component of the ternary complex CCND1/CDK4/CDKN1B required for nuclear translocation and modulation of CDK4-mediated kinase activity. Interacts directly with CDKN1B. Can form similar complexes with either CDKN1A or CDKN2A. Interacts with UHRF2; the interaction ubiquitinates CCND1 and appears to occur independently of phosphorylation. Interacts with USP2. Interacts (via cyclin N-terminal domain) with INSM1 (via N-terminal region); the interaction competes with the binding of CCND1 to CDK4 during cell cycle progression and inhibits CDK4 activity. Interacts with CDK4; the interaction is prevented with the binding of CCND1 to INSM1 during cell cycle progression. Phosphorylation at Thr-286 by MAP kinases is required for ubiquitination and degradation by the DCX(AMBRA1) complex. It also plays an essential role for recognition by the FBXO31 component of SCF (SKP1-cullin-F-box) protein ligase complex following DNA damage. In terms of processing, ubiquitinated at Lys-270 by the DCX(AMBRA1) complex during the transition from G1 to S cell phase, leading to its degradation: ubiquitination is dependent on Thr-286 phosphorylation. The DCX(AMBRA1) complex represents the major regulator of CCND1 stability during the G1/S transition. Also ubiquitinated by the SCF(FBXO4) and Cul7-RING(FBXW8) ubiquitin-protein ligase complexes. Following DNA damage it is ubiquitinated by the SCF(FBXO31) protein ligase complex. SCF(FBXO31) ubiquitination is dependent on Thr-286 phosphorylation. Ubiquitinated also by UHRF2 apparently in a phosphorylation-independent manner. Ubiquitination leads to its degradation and G1 arrest. Deubiquitinated by USP2; leading to its stabilization.

The protein localises to the nucleus. It localises to the cytoplasm. The protein resides in the nucleus membrane. In terms of biological role, regulatory component of the cyclin D1-CDK4 (DC) complex that phosphorylates and inhibits members of the retinoblastoma (RB) protein family including RB1 and regulates the cell-cycle during G(1)/S transition. Phosphorylation of RB1 allows dissociation of the transcription factor E2F from the RB/E2F complex and the subsequent transcription of E2F target genes which are responsible for the progression through the G(1) phase. Hypophosphorylates RB1 in early G(1) phase. Cyclin D-CDK4 complexes are major integrators of various mitogenenic and antimitogenic signals. Also a substrate for SMAD3, phosphorylating SMAD3 in a cell-cycle-dependent manner and repressing its transcriptional activity. Component of the ternary complex, cyclin D1/CDK4/CDKN1B, required for nuclear translocation and activity of the cyclin D-CDK4 complex. Exhibits transcriptional corepressor activity with INSM1 on the NEUROD1 and INS promoters in a cell cycle-independent manner. The chain is G1/S-specific cyclin-D1 (CCND1) from Canis lupus familiaris (Dog).